Consider the following 201-residue polypeptide: ATP-dependent Clp protease proteolytic subunit (201 aa).

The Nucleophile role is filled by S97. H122 is an active-site residue.

This sequence belongs to the peptidase S14 family. In terms of assembly, fourteen ClpP subunits assemble into 2 heptameric rings which stack back to back to give a disk-like structure with a central cavity, resembling the structure of eukaryotic proteasomes.

The protein resides in the cytoplasm. The catalysed reaction is Hydrolysis of proteins to small peptides in the presence of ATP and magnesium. alpha-casein is the usual test substrate. In the absence of ATP, only oligopeptides shorter than five residues are hydrolyzed (such as succinyl-Leu-Tyr-|-NHMec, and Leu-Tyr-Leu-|-Tyr-Trp, in which cleavage of the -Tyr-|-Leu- and -Tyr-|-Trp bonds also occurs).. Functionally, cleaves peptides in various proteins in a process that requires ATP hydrolysis. Has a chymotrypsin-like activity. Plays a major role in the degradation of misfolded proteins. This Nitratidesulfovibrio vulgaris (strain ATCC 29579 / DSM 644 / CCUG 34227 / NCIMB 8303 / VKM B-1760 / Hildenborough) (Desulfovibrio vulgaris) protein is ATP-dependent Clp protease proteolytic subunit.